A 534-amino-acid polypeptide reads, in one-letter code: Calcium-dependent protein kinase 18 (534 aa).

The tract at residues 1 to 49 (MGLCFSSPKATRRGTGSRNPNPDSPTQGKASEKVSNKNKKNTKKIQLRH) is disordered. A lipid anchor (N-myristoyl glycine) is attached at Gly-2. The span at 14–29 (GTGSRNPNPDSPTQGK) shows a compositional bias: polar residues. Basic residues predominate over residues 36–47 (NKNKKNTKKIQL). Residues 71 to 331 (YTIGKLLGHG…AAQALSHSWV (261 aa)) form the Protein kinase domain. ATP-binding positions include 77 to 85 (LGHGQFGFT) and Lys-100. The active-site Proton acceptor is the Asp-197. A Phosphoserine modification is found at Ser-237. The interval 337 to 367 (ASEVPIDISVLNNMRQFVKFSRLKQIALRAL) is autoinhibitory domain. EF-hand domains follow at residues 374-409 (DELD…DVPW), 411-446 (LKDA…VNQL), 453-488 (KWQQ…KGSI), and 491-518 (LLEE…ASLK). Positions 387, 389, 391, 393, 398, 424, 426, 428, 435, 466, 468, 470, 477, 496, 498, 500, and 502 each coordinate Ca(2+). Ser-504 is modified (phosphoserine). Glu-507 contacts Ca(2+).

It belongs to the protein kinase superfamily. Ser/Thr protein kinase family. CDPK subfamily.

It localises to the membrane. The catalysed reaction is L-seryl-[protein] + ATP = O-phospho-L-seryl-[protein] + ADP + H(+). It carries out the reaction L-threonyl-[protein] + ATP = O-phospho-L-threonyl-[protein] + ADP + H(+). Its activity is regulated as follows. Activated by calcium. Autophosphorylation may play an important role in the regulation of the kinase activity. In terms of biological role, may play a role in signal transduction pathways that involve calcium as a second messenger. The sequence is that of Calcium-dependent protein kinase 18 (CPK18) from Arabidopsis thaliana (Mouse-ear cress).